The following is a 637-amino-acid chain: Limonene/alpha-pinene synthase, chloroplastic (637 aa).

Residues 1–56 constitute a chloroplast transit peptide; that stretch reads MALLSIVSLQVPKSCGLKSLISSSNVQKALCISTAVPTLRMRRRQKALVINMKLTT. Mg(2+)-binding residues include Asp388, Asp392, and Asp540. Residues 388–392 carry the DDXXD motif motif; sequence DDMYD.

This sequence belongs to the terpene synthase family. Tpsd subfamily. It depends on Mg(2+) as a cofactor. Mn(2+) serves as cofactor. Requires K(+) as cofactor.

It is found in the plastid. Its subcellular location is the chloroplast. It catalyses the reaction (2E)-geranyl diphosphate = (4S)-limonene + diphosphate. It carries out the reaction (2E)-geranyl diphosphate = (1S,5S)-alpha-pinene + diphosphate. It participates in terpene metabolism; oleoresin biosynthesis. Its function is as follows. Involved in defensive oleoresin formation in conifers in response to insect attack or other injury. Involved in monoterpene (C10) olefins biosynthesis. The chain is Limonene/alpha-pinene synthase, chloroplastic (ag11) from Abies grandis (Grand fir).